Here is a 351-residue protein sequence, read N- to C-terminus: Autoinducer 2 import system permease protein LsrC (351 aa).

9 consecutive transmembrane segments (helical) span residues 14-34 (LLAI…YFSL), 39-59 (MIFS…LVML), 70-90 (ITGL…GLAA), 93-113 (LFAL…VTWL), 115-135 (IPAI…MLLL), 155-175 (ILFS…AMAW), 213-233 (MNGV…GFIP), 252-272 (GISL…AFLL), and 284-304 (LPAW…LVFD).

The protein belongs to the binding-protein-dependent transport system permease family. AraH/RbsC subfamily. In terms of assembly, the complex is composed of two ATP-binding proteins (LsrA), two transmembrane proteins (LsrC and LsrD) and a solute-binding protein (LsrB).

Its subcellular location is the cell inner membrane. Functionally, part of the ABC transporter complex LsrABCD involved in autoinducer 2 (AI-2) import. Probably responsible for the translocation of the substrate across the membrane. The sequence is that of Autoinducer 2 import system permease protein LsrC (lsrC) from Yersinia pestis bv. Antiqua (strain Antiqua).